A 255-amino-acid polypeptide reads, in one-letter code: Imidazole glycerol phosphate synthase subunit HisF (255 aa).

Residues Asp12 and Asp131 contribute to the active site.

Belongs to the HisA/HisF family. As to quaternary structure, heterodimer of HisH and HisF.

The protein localises to the cytoplasm. The catalysed reaction is 5-[(5-phospho-1-deoxy-D-ribulos-1-ylimino)methylamino]-1-(5-phospho-beta-D-ribosyl)imidazole-4-carboxamide + L-glutamine = D-erythro-1-(imidazol-4-yl)glycerol 3-phosphate + 5-amino-1-(5-phospho-beta-D-ribosyl)imidazole-4-carboxamide + L-glutamate + H(+). It functions in the pathway amino-acid biosynthesis; L-histidine biosynthesis; L-histidine from 5-phospho-alpha-D-ribose 1-diphosphate: step 5/9. Its function is as follows. IGPS catalyzes the conversion of PRFAR and glutamine to IGP, AICAR and glutamate. The HisF subunit catalyzes the cyclization activity that produces IGP and AICAR from PRFAR using the ammonia provided by the HisH subunit. This is Imidazole glycerol phosphate synthase subunit HisF from Vesicomyosocius okutanii subsp. Calyptogena okutanii (strain HA).